A 72-amino-acid polypeptide reads, in one-letter code: Small ribosomal subunit protein bS18 (72 aa).

This sequence belongs to the bacterial ribosomal protein bS18 family. As to quaternary structure, part of the 30S ribosomal subunit. Forms a tight heterodimer with protein bS6.

Its function is as follows. Binds as a heterodimer with protein bS6 to the central domain of the 16S rRNA, where it helps stabilize the platform of the 30S subunit. In Trichodesmium erythraeum (strain IMS101), this protein is Small ribosomal subunit protein bS18.